A 368-amino-acid polypeptide reads, in one-letter code: CST complex subunit STN1 (368 aa).

The interval 2-192 is interaction with CTC1; the sequence is AVSLGDDDAD…KCYDQPFKMP (191 aa). The OB DNA-binding region spans 58–162; the sequence is VDVLGIVVYK…EIKATSFYKV (105 aa). 2 winged helix-turn-helix (wHTH) regions span residues 201–295 and 296–368; these read AGGS…NVTE and QDKD…YIVL.

The protein belongs to the CTC1 family. In terms of assembly, component of the CST complex.

The protein resides in the nucleus. Its subcellular location is the chromosome. The protein localises to the telomere. Functionally, component of the CST complex proposed to act as a specialized replication factor promoting DNA replication under conditions of replication stress or natural replication barriers such as the telomere duplex. The CST complex binds single-stranded DNA with high affinity in a sequence-independent manner, while isolated subunits bind DNA with low affinity by themselves. Initially the CST complex has been proposed to protect telomeres from DNA degradation. However, the CST complex has been shown to be involved in several aspects of telomere replication. The sequence is that of CST complex subunit STN1 from Danio rerio (Zebrafish).